Here is a 1548-residue protein sequence, read N- to C-terminus: UDP-glucose:glycoprotein glucosyltransferase (1548 aa).

The signal sequence occupies residues 1–22 (MLRAVALCVSVVLIALYTPTSG). Residue N181 is glycosylated (N-linked (GlcNAc...) asparagine). Basic and acidic residues predominate over residues 243-253 (TEYKSQDDAPK). Residues 243–265 (TEYKSQDDAPKPEAGSTSDEDLA) are disordered. N266 and N864 each carry an N-linked (GlcNAc...) asparagine glycan. Positions 1227-1548 (SANQAATDED…PSHEPKHGEL (322 aa)) are glucosyltransferase. A compositionally biased stretch (basic and acidic residues) spans 1512-1523 (EDHENSHSRDSA). Residues 1512–1548 (EDHENSHSRDSAVDDSVDDSVEVTTVTPSHEPKHGEL) are disordered. Residues 1545–1548 (HGEL) carry the Prevents secretion from ER motif.

It belongs to the glycosyltransferase 8 family. Monomer. May interact with CG7484/Sep15. Ca(2+) serves as cofactor. It depends on Mn(2+) as a cofactor.

The protein resides in the endoplasmic reticulum lumen. It is found in the endoplasmic reticulum-Golgi intermediate compartment. The enzyme catalyses N(4)-(alpha-D-Man-(1-&gt;2)-alpha-D-Man-(1-&gt;2)-alpha-D-Man-(1-&gt;3)-[alpha-D-Man-(1-&gt;2)-alpha-D-Man-(1-&gt;3)-[alpha-D-Man-(1-&gt;2)-alpha-D-Man-(1-&gt;6)]-alpha-D-Man-(1-&gt;6)]-beta-D-Man-(1-&gt;4)-beta-D-GlcNAc-(1-&gt;4)-beta-D-GlcNAc)-L-asparaginyl-[protein] (N-glucan mannose isomer 9A1,2,3B1,2,3) + UDP-alpha-D-glucose = N(4)-(alpha-D-Glc-(1-&gt;3)-alpha-D-Man-(1-&gt;2)-alpha-D-Man-(1-&gt;2)-alpha-D-Man-(1-&gt;3)-[alpha-D-Man-(1-&gt;2)-alpha-D-Man-(1-&gt;3)-[alpha-D-Man-(1-&gt;2)-alpha-D-Man-(1-&gt;6)]-alpha-D-Man-(1-&gt;6)]-beta-D-Man-(1-&gt;4)-beta-D-GlcNAc-(1-&gt;4)-beta-D-GlcNAc)-L-asparaginyl-[protein] + UDP + H(+). Its pathway is protein modification; protein glycosylation. Functionally, recognizes glycoproteins with minor folding defects. Reglucosylates single N-glycans near the misfolded part of the protein, thus providing quality control for protein folding in the endoplasmic reticulum. Reglucosylated proteins are recognized by calreticulin for recycling to the endoplasmic reticulum and refolding or degradation. This Drosophila melanogaster (Fruit fly) protein is UDP-glucose:glycoprotein glucosyltransferase.